Reading from the N-terminus, the 207-residue chain is Protein-L-isoaspartate O-methyltransferase (207 aa).

The active site involves S56.

The protein belongs to the methyltransferase superfamily. L-isoaspartyl/D-aspartyl protein methyltransferase family.

The protein localises to the cytoplasm. It carries out the reaction [protein]-L-isoaspartate + S-adenosyl-L-methionine = [protein]-L-isoaspartate alpha-methyl ester + S-adenosyl-L-homocysteine. Its function is as follows. Catalyzes the methyl esterification of L-isoaspartyl residues in peptides and proteins that result from spontaneous decomposition of normal L-aspartyl and L-asparaginyl residues. It plays a role in the repair and/or degradation of damaged proteins. The sequence is that of Protein-L-isoaspartate O-methyltransferase from Pyrobaculum neutrophilum (strain DSM 2338 / JCM 9278 / NBRC 100436 / V24Sta) (Thermoproteus neutrophilus).